We begin with the raw amino-acid sequence, 513 residues long: Putative fucosyltransferase-like protein (513 aa).

The disordered stretch occupies residues 1-34 (MGVFSNLRGPRAGATHDEFPATNGSPSSSSSPSS). At 1 to 39 (MGVFSNLRGPRAGATHDEFPATNGSPSSSSSPSSSIKRK) the chain is on the cytoplasmic side. The span at 25–34 (SPSSSSSPSS) shows a compositional bias: low complexity. Residues 40-60 (LSNLLPLCVALVVIAEIGFLG) form a helical; Signal-anchor for type II membrane protein membrane-spanning segment. Residues 61–513 (RLDKVALVDT…PCAKFEVVFV (453 aa)) are Lumenal-facing. N-linked (GlcNAc...) asparagine glycans are attached at residues asparagine 348 and asparagine 493.

It belongs to the glycosyltransferase 10 family.

It is found in the golgi apparatus. It localises to the golgi stack membrane. It functions in the pathway protein modification; protein glycosylation. Its function is as follows. May be involved in cell wall biosynthesis. May act as a fucosyltransferase. The sequence is that of Putative fucosyltransferase-like protein (FUT12) from Arabidopsis thaliana (Mouse-ear cress).